The following is a 417-amino-acid chain: MLEQMGIAAKQASYKLAQLSSREKNRVLEKIADELEAQSESILNANAQDVADARANGLSEAMLDRLALTPARLKGIADDVRQVCNLADPVGQVIDGGVLDSGLRLERRRVPLGVIGVIYEARPNVTVDVASLCLKTGNAVILRGGKETCRTNAATVAVIQDALKSCGLPAGAVQAIDNPDRALVSEMLRMDKYIDMLIPRGGAGLHKLCREQSTIPVITGGIGVCHIYVDESAEIAEALKVIVNAKTQRPSTCNTVETLLVNKNIADSFLPALSKQMAESGVTLHADAAALAQLQAGPAKVVAVKAEEYDDEFLSLDLNVKIVSDLDDAIAHIREHGTQHSDAILTRDMRNAQRFVNEVDSSAVYVNASTRFTDGGQFGLGAEVAVSTQKLHARGPMGLEALTTYKWIGIGDYTIRA.

This sequence belongs to the gamma-glutamyl phosphate reductase family.

The protein resides in the cytoplasm. It catalyses the reaction L-glutamate 5-semialdehyde + phosphate + NADP(+) = L-glutamyl 5-phosphate + NADPH + H(+). It participates in amino-acid biosynthesis; L-proline biosynthesis; L-glutamate 5-semialdehyde from L-glutamate: step 2/2. In terms of biological role, catalyzes the NADPH-dependent reduction of L-glutamate 5-phosphate into L-glutamate 5-semialdehyde and phosphate. The product spontaneously undergoes cyclization to form 1-pyrroline-5-carboxylate. The protein is Gamma-glutamyl phosphate reductase of Escherichia coli O45:K1 (strain S88 / ExPEC).